The sequence spans 399 residues: Probable 3-ketosteroid-9-alpha-monooxygenase, oxygenase component (399 aa).

Residues 26–128 form the Rieske domain; it reads WHCLGLVRDF…VAEVSGQLFV (103 aa). [2Fe-2S] cluster-binding residues include cysteine 67, histidine 69, cysteine 86, and histidine 89. The Fe cation site is built by asparagine 175, histidine 181, histidine 186, and aspartate 307.

Homotrimer. The two-component system 3-ketosteroid-9-alpha-monooxygenase is composed of an oxygenase component KshA and a reductase component KshB. Requires [2Fe-2S] cluster as cofactor. The cofactor is Fe cation.

Its function is as follows. Could catalyze the introduction of a 9alpha-hydroxyl moiety into the ring B of 3-ketosteroid substrates. In Rhodococcus rhodochrous, this protein is Probable 3-ketosteroid-9-alpha-monooxygenase, oxygenase component.